Reading from the N-terminus, the 128-residue chain is Large ribosomal subunit protein mL51 (128 aa).

The transit peptide at 1–31 directs the protein to the mitochondrion; the sequence is MAGNLLSGAGRRLWDWVPLACRSFSLGVPRL.

This sequence belongs to the mitochondrion-specific ribosomal protein mL51 family. As to quaternary structure, component of the mitochondrial large ribosomal subunit (mt-LSU). Mature mammalian 55S mitochondrial ribosomes consist of a small (28S) and a large (39S) subunit. The 28S small subunit contains a 12S ribosomal RNA (12S mt-rRNA) and 30 different proteins. The 39S large subunit contains a 16S rRNA (16S mt-rRNA), a copy of mitochondrial valine transfer RNA (mt-tRNA(Val)), which plays an integral structural role, and 52 different proteins. Interacts with OXA1L.

It localises to the mitochondrion. This is Large ribosomal subunit protein mL51 (MRPL51) from Homo sapiens (Human).